Here is a 220-residue protein sequence, read N- to C-terminus: Glutamine amidotransferase-like class 1 domain-containing protein 1 (220 aa).

An N-terminal signal peptide occupies residues 1 to 38; that stretch reads MASERLPNRPACLLVASGAAEGVSAQSFLHCFTMASTA. N-linked (GlcNAc...) asparagine glycosylation is present at Asn201.

This sequence belongs to the peptidase C56 family. Homotetramer. Component of the FERRY complex composed of five subunits, TBCK, PPP1R21, FERRY3, CRYZL1 and GATD1 with a ratio of 1:2:1:2:4, respectively.

Its subcellular location is the secreted. It is found in the early endosome. Functionally, component of the FERRY complex (Five-subunit Endosomal Rab5 and RNA/ribosome intermediary). The FERRY complex directly interacts with mRNAs and RAB5A, and functions as a RAB5A effector involved in the localization and the distribution of specific mRNAs most likely by mediating their endosomal transport. The complex recruits mRNAs and ribosomes to early endosomes through direct mRNA-interaction. This Homo sapiens (Human) protein is Glutamine amidotransferase-like class 1 domain-containing protein 1.